Here is a 432-residue protein sequence, read N- to C-terminus: N-acylneuraminate cytidylyltransferase (432 aa).

The substrate site is built by Arg-39, Asn-49, Arg-98, Ser-107, Ser-109, and Gln-130. Arg-188 is an active-site residue.

The protein belongs to the CMP-NeuNAc synthase family. As to quaternary structure, homotetramer; the active enzyme is formed by a dimer of dimers. In terms of tissue distribution, expressed in testis, ovary and liver.

It localises to the nucleus. The enzyme catalyses an N-acylneuraminate + CTP = a CMP-N-acyl-beta-neuraminate + diphosphate. It functions in the pathway amino-sugar metabolism; N-acetylneuraminate metabolism. Its function is as follows. Catalyzes the activation of N-acetylneuraminic acid (NeuNAc) to cytidine 5'-monophosphate N-acetylneuraminic acid (CMP-NeuNAc), a substrate required for the addition of sialic acid. This Oncorhynchus mykiss (Rainbow trout) protein is N-acylneuraminate cytidylyltransferase (cmas).